The chain runs to 349 residues: MSDFQREQRKNEHVEIAMAQSDAMHSDFDKMRFVHHSIPSINVNDIDLTSQTPDLTMAYPIYINAMTGGSEWTKNINEKLAVVARETGLAMAVGSTHAALRNPRMAETFTIARKMNPEGMIFSNVGADVPVEKALEAVELLEAQALQIHVNSPQELVMPEGNREFVTWLDNIASIVSRVSVPVIIKEVGFGMSKELMHDLQQIGVKYVDVSGKGGTNFVDIENERRANKDMDYLSSWGQSTVESLLETTAYQSEISVFASGGLRTPLDAIKSLALGAKATGMSRPFLNQVENNGIAHTVAYVESFIEHMKSIMTMLDAKNIDDLTQKQIVFSPEIMSWIEQRSLNIHRG.

Residue 9-10 (RK) coordinates substrate. FMN contacts are provided by residues 65 to 67 (AMT), S95, and N124. Substrate is bound at residue 95–97 (STH). Q154 serves as a coordination point for substrate. E155 lines the Mg(2+) pocket. Residues K186, S211, T216, 262-264 (GLR), and 283-284 (SR) each bind FMN.

Belongs to the IPP isomerase type 2 family. In terms of assembly, homooctamer. Dimer of tetramers. The cofactor is FMN. NADPH is required as a cofactor. Mg(2+) serves as cofactor.

The protein resides in the cytoplasm. It catalyses the reaction isopentenyl diphosphate = dimethylallyl diphosphate. Its function is as follows. Involved in the biosynthesis of isoprenoids. Catalyzes the 1,3-allylic rearrangement of the homoallylic substrate isopentenyl (IPP) to its allylic isomer, dimethylallyl diphosphate (DMAPP). In Staphylococcus aureus (strain JH1), this protein is Isopentenyl-diphosphate delta-isomerase.